Consider the following 257-residue polypeptide: Thiazole synthase (257 aa).

Lysine 96 acts as the Schiff-base intermediate with DXP in catalysis. 1-deoxy-D-xylulose 5-phosphate-binding positions include glycine 157, 184 to 185, and 206 to 207; these read AG and NT.

It belongs to the ThiG family. As to quaternary structure, homotetramer. Forms heterodimers with either ThiH or ThiS.

The protein resides in the cytoplasm. It carries out the reaction [ThiS sulfur-carrier protein]-C-terminal-Gly-aminoethanethioate + 2-iminoacetate + 1-deoxy-D-xylulose 5-phosphate = [ThiS sulfur-carrier protein]-C-terminal Gly-Gly + 2-[(2R,5Z)-2-carboxy-4-methylthiazol-5(2H)-ylidene]ethyl phosphate + 2 H2O + H(+). The protein operates within cofactor biosynthesis; thiamine diphosphate biosynthesis. In terms of biological role, catalyzes the rearrangement of 1-deoxy-D-xylulose 5-phosphate (DXP) to produce the thiazole phosphate moiety of thiamine. Sulfur is provided by the thiocarboxylate moiety of the carrier protein ThiS. In vitro, sulfur can be provided by H(2)S. The sequence is that of Thiazole synthase from Allorhizobium ampelinum (strain ATCC BAA-846 / DSM 112012 / S4) (Agrobacterium vitis (strain S4)).